Here is a 254-residue protein sequence, read N- to C-terminus: Fluoride-specific ion channel FluC 1 (254 aa).

Transmembrane regions (helical) follow at residues 19–39 (LDILVANVVACFLLGTVTALY), 51–71 (IIGMGMMGGVSTFSSFAYGSV), and 80–100 (AFLIAAAYVTVSVVAGYVAVL). Positions 58 and 61 each coordinate Na(+).

This sequence belongs to the fluoride channel Fluc/FEX (TC 1.A.43) family.

It is found in the cell inner membrane. The enzyme catalyses fluoride(in) = fluoride(out). Na(+) is not transported, but it plays an essential structural role and its presence is essential for fluoride channel function. In terms of biological role, fluoride-specific ion channel. Important for reducing fluoride concentration in the cell, thus reducing its toxicity. This is Fluoride-specific ion channel FluC 1 from Brucella suis biovar 1 (strain 1330).